The sequence spans 255 residues: tRNA pseudouridine synthase A (255 aa).

The active-site Nucleophile is Asp-43. Position 94 (Tyr-94) interacts with substrate.

This sequence belongs to the tRNA pseudouridine synthase TruA family.

The enzyme catalyses uridine(38/39/40) in tRNA = pseudouridine(38/39/40) in tRNA. In terms of biological role, formation of pseudouridine at positions 38, 39 and 40 in the anticodon stem and loop of transfer RNAs. In Pyrobaculum neutrophilum (strain DSM 2338 / JCM 9278 / NBRC 100436 / V24Sta) (Thermoproteus neutrophilus), this protein is tRNA pseudouridine synthase A.